The sequence spans 180 residues: Ribosome rescue factor SmrB (180 aa).

One can recognise a Smr domain in the interval 98–173 (LDLHGLTQLI…GDAALLLLVE (76 aa)).

It belongs to the SmrB family. As to quaternary structure, associates with collided ribosomes, but not with correctly translating polysomes.

Its function is as follows. Acts as a ribosome collision sensor. Detects stalled/collided disomes (pairs of ribosomes where the leading ribosome is stalled and a second ribosome has collided with it) and endonucleolytically cleaves mRNA at the 5' boundary of the stalled ribosome. Stalled/collided disomes form a new interface (primarily via the 30S subunits) that binds SmrB. Cleaved mRNA becomes available for tmRNA ligation, leading to ribosomal subunit dissociation and rescue of stalled ribosomes. This Proteus mirabilis (strain HI4320) protein is Ribosome rescue factor SmrB.